The chain runs to 149 residues: Large ribosomal subunit protein bL9 (149 aa).

It belongs to the bacterial ribosomal protein bL9 family.

Functionally, binds to the 23S rRNA. The protein is Large ribosomal subunit protein bL9 of Amoebophilus asiaticus (strain 5a2).